A 277-amino-acid polypeptide reads, in one-letter code: uncharacterized protein (277 aa).

2 disordered regions span residues 33-168 (KNDN…VTTR) and 210-277 (NKLL…PIEF). Residues 34-45 (NDNDERTAHEES) are compositionally biased toward basic and acidic residues. Residues 86–99 (LKSKSKRKTKKGGS) show a composition bias toward basic residues. Composition is skewed to basic and acidic residues over residues 100-113 (KPRE…KHIV), 151-168 (AKEL…VTTR), and 216-230 (TNED…NKEK). Positions 231 to 241 (DRKRRERRTAR) are enriched in basic residues. Basic and acidic residues predominate over residues 242-258 (RKDERKQEKKQEKKQDN). Residues 259–271 (KTSQSFPSSTDMN) show a composition bias toward polar residues.

Its subcellular location is the cytoplasm. This is an uncharacterized protein from Saccharomyces cerevisiae (strain ATCC 204508 / S288c) (Baker's yeast).